Here is a 196-residue protein sequence, read N- to C-terminus: Mitochondrial intermembrane space cysteine motif-containing protein MIX23 (196 aa).

The Cx14C motif motif lies at cysteine 99 to cysteine 114. The short motif at cysteine 178–cysteine 192 is the Cx13C motif element.

The protein belongs to the MIX23 family.

It is found in the mitochondrion intermembrane space. In terms of biological role, regulator of the mitochondrial protein import machinery that is localized in the mitochondrial intermembrane space (IMS) and facilitates the transport of proteins from the cytosol into the mitochondrial matrix. Not essential for mitochondrial protein import but induced and required when mitochondrial import is compromised. Stimulates or stabilizes the translocation into the mitochondria of proteins such as OXA1, ATP1 and COX12. This chain is Mitochondrial intermembrane space cysteine motif-containing protein MIX23, found in Saccharomyces cerevisiae (strain ATCC 204508 / S288c) (Baker's yeast).